The following is a 195-amino-acid chain: Transcriptional regulator GfcR (195 aa).

Belongs to the purine/pyrimidine phosphoribosyltransferase family. GfcR subfamily.

This chain is Transcriptional regulator GfcR, found in Picrophilus torridus (strain ATCC 700027 / DSM 9790 / JCM 10055 / NBRC 100828 / KAW 2/3).